Here is a 607-residue protein sequence, read N- to C-terminus: Karyogamy meiotic segregation protein 1 (607 aa).

Positions 83-135 (DDSFANQAEKPSMEQQNSKNSIKEDANEHSVNSAHSKSSSNASPESLNPSQMM) are disordered. Low complexity predominate over residues 111–132 (HSVNSAHSKSSSNASPESLNPS).

In terms of assembly, interacts with mcp1 and sad1.

It localises to the cytoplasm. Its subcellular location is the cytoskeleton. It is found in the microtubule organizing center. The protein resides in the spindle pole body. Functionally, has a role in karyogamy, recombination and segregation during meiosis. Although it has been shown to associate with the spindle pole body it is unlikely to be involved in its formation or maintenance. This is Karyogamy meiotic segregation protein 1 (kms1) from Schizosaccharomyces pombe (strain 972 / ATCC 24843) (Fission yeast).